Consider the following 429-residue polypeptide: Ribosomal protein uS12 methylthiotransferase RimO (429 aa).

An MTTase N-terminal domain is found at histidine 2–arginine 118. Residues cysteine 11, cysteine 47, cysteine 81, cysteine 142, cysteine 146, and cysteine 149 each contribute to the [4Fe-4S] cluster site. The Radical SAM core domain maps to leucine 128–glutamate 357. Positions arginine 360 to glycine 427 constitute a TRAM domain.

This sequence belongs to the methylthiotransferase family. RimO subfamily. [4Fe-4S] cluster serves as cofactor.

Its subcellular location is the cytoplasm. The catalysed reaction is L-aspartate(89)-[ribosomal protein uS12]-hydrogen + (sulfur carrier)-SH + AH2 + 2 S-adenosyl-L-methionine = 3-methylsulfanyl-L-aspartate(89)-[ribosomal protein uS12]-hydrogen + (sulfur carrier)-H + 5'-deoxyadenosine + L-methionine + A + S-adenosyl-L-homocysteine + 2 H(+). Functionally, catalyzes the methylthiolation of an aspartic acid residue of ribosomal protein uS12. This is Ribosomal protein uS12 methylthiotransferase RimO from Chlorobium limicola (strain DSM 245 / NBRC 103803 / 6330).